Consider the following 1479-residue polypeptide: Chromosome partition protein MukB (1479 aa).

34-41 (GGNGAGKS) contacts ATP. Coiled-coil stretches lie at residues 337–418 (LNLV…QYQQ), 511–603 (QAER…RAPV), 780–810 (RAAREMRLESLRDEREALAEQYATLSFDVQK), 847–1116 (ELDR…AKAG), and 1206–1265 (DDPV…LQAV). Residues 666 to 783 (PGGSEDPRLN…EVPLFGRAAR (118 aa)) are flexible hinge.

It belongs to the SMC family. MukB subfamily. Homodimerization via its hinge domain. Binds to DNA via its C-terminal region. Interacts, and probably forms a ternary complex, with MukE and MukF via its C-terminal region. The complex formation is stimulated by calcium or magnesium. Interacts with tubulin-related protein FtsZ.

It localises to the cytoplasm. It is found in the nucleoid. Plays a central role in chromosome condensation, segregation and cell cycle progression. Functions as a homodimer, which is essential for chromosome partition. Involved in negative DNA supercoiling in vivo, and by this means organize and compact chromosomes. May achieve or facilitate chromosome segregation by condensation DNA from both sides of a centrally located replisome during cell division. This is Chromosome partition protein MukB from Pectobacterium carotovorum subsp. carotovorum (strain PC1).